We begin with the raw amino-acid sequence, 81 residues long: Protein Vpu (81 aa).

Residues 1-7 are Extracellular-facing; it reads MSNLLAI. Residues 8 to 28 form a helical membrane-spanning segment; that stretch reads GIAALIVALIITIVVWTIAYI. Over 29-81 the chain is Cytoplasmic; sequence EYKKLVRQRKINRLYKRISERAEDSGNESEGDAEELAALGEVGPFIPGDINNL. A phosphoserine; by host CK2 mark is found at S53 and S57.

Belongs to the HIV-1 VPU protein family. In terms of assembly, homopentamer. Interacts with host CD4 and BRTC; these interactions induce proteasomal degradation of CD4. Interacts with host BST2; this interaction leads to the degradation of host BST2. Interacts with host FBXW11. Interacts with host AP1M1; this interaction plays a role in the mistrafficking and subsequent degradation of host BST2. Interacts with host RANBP2; this interaction allows Vpu to down-regulate host BLM sumoylation. Post-translationally, phosphorylated by host CK2. This phosphorylation is necessary for interaction with human BTRC and degradation of CD4.

The protein localises to the host membrane. Ion channel activity is inhibited by hexamethylene amiloride in vitro. Enhances virion budding by targeting host CD4 and Tetherin/BST2 to proteasome degradation. Degradation of CD4 prevents any unwanted premature interactions between viral Env and its host receptor CD4 in the endoplasmic reticulum. Degradation of antiretroviral protein Tetherin/BST2 is important for virion budding, as BST2 tethers new viral particles to the host cell membrane. Mechanistically, Vpu bridges either CD4 or BST2 to BTRC, a substrate recognition subunit of the Skp1/Cullin/F-box protein E3 ubiquitin ligase, induces their ubiquitination and subsequent proteasomal degradation. The alteration of the E3 ligase specificity by Vpu seems to promote the degradation of host IKBKB, leading to NF-kappa-B down-regulation and subsequent apoptosis. Acts as a viroporin that forms an oligomeric ion channel in membranes. Modulates the host DNA repair mechanisms to promote degradation of nuclear viral cDNA in cells that are already productively infected in order to suppress immune sensing and proviral hyper-integration (superinfection). Manipulates PML-NBs and modulates SUMOylation of host BLM protein thereby enhancing its DNA-end processing activity toward viral unintegrated linear DNA. Also inhibits RAD52-mediated homologous repair of viral cDNA, preventing the generation of dead-end circular forms of single copies of the long terminal repeat and permitting sustained nucleolytic attack. The polypeptide is Protein Vpu (Homo sapiens (Human)).